Consider the following 151-residue polypeptide: Transcription elongation factor GreA (151 aa).

The stretch at 41–62 forms a coiled coil; it reads AEYHAAREKQSFIEGRIKELEA.

Belongs to the GreA/GreB family.

In terms of biological role, necessary for efficient RNA polymerase transcription elongation past template-encoded arresting sites. The arresting sites in DNA have the property of trapping a certain fraction of elongating RNA polymerases that pass through, resulting in locked ternary complexes. Cleavage of the nascent transcript by cleavage factors such as GreA or GreB allows the resumption of elongation from the new 3'terminus. GreA releases sequences of 2 to 3 nucleotides. This chain is Transcription elongation factor GreA, found in Cereibacter sphaeroides (strain ATCC 17023 / DSM 158 / JCM 6121 / CCUG 31486 / LMG 2827 / NBRC 12203 / NCIMB 8253 / ATH 2.4.1.) (Rhodobacter sphaeroides).